Here is a 114-residue protein sequence, read N- to C-terminus: Ferredoxin (114 aa).

2 residues coordinate [3Fe-4S] cluster: C9 and C17. Positions 21, 40, 43, and 46 each coordinate [4Fe-4S] cluster. The region spanning 31 to 60 (RMLYINPDECVDCGACKPACRVEAIYWEGD) is the 4Fe-4S ferredoxin-type domain. C50 serves as a coordination point for [3Fe-4S] cluster.

The cofactor is [4Fe-4S] cluster. [3Fe-4S] cluster serves as cofactor.

Functionally, ferredoxins are iron-sulfur proteins that transfer electrons in a wide variety of metabolic reactions. The polypeptide is Ferredoxin (fdxA) (Mycobacterium tuberculosis (strain ATCC 25618 / H37Rv)).